Consider the following 130-residue polypeptide: Protein ApaG (130 aa).

The 125-residue stretch at 3–127 folds into the ApaG domain; it reads RAVTRQIEVL…FSLDSPDIRR (125 aa).

This is Protein ApaG from Afipia carboxidovorans (strain ATCC 49405 / DSM 1227 / KCTC 32145 / OM5) (Oligotropha carboxidovorans).